Consider the following 371-residue polypeptide: Queuine tRNA-ribosyltransferase (371 aa).

Catalysis depends on Asp-90, which acts as the Proton acceptor. Residues 90 to 94 (DSGGF), Asp-144, Gln-189, and Gly-215 contribute to the substrate site. Residues 246-252 (GVGTPEN) form an RNA binding region. The active-site Nucleophile is the Asp-265. Residues 270–274 (TRNAR) form an RNA binding; important for wobble base 34 recognition region. Positions 303, 305, 308, and 334 each coordinate Zn(2+).

The protein belongs to the queuine tRNA-ribosyltransferase family. As to quaternary structure, homodimer. Within each dimer, one monomer is responsible for RNA recognition and catalysis, while the other monomer binds to the replacement base PreQ1. The cofactor is Zn(2+).

The catalysed reaction is 7-aminomethyl-7-carbaguanine + guanosine(34) in tRNA = 7-aminomethyl-7-carbaguanosine(34) in tRNA + guanine. Its pathway is tRNA modification; tRNA-queuosine biosynthesis. Functionally, catalyzes the base-exchange of a guanine (G) residue with the queuine precursor 7-aminomethyl-7-deazaguanine (PreQ1) at position 34 (anticodon wobble position) in tRNAs with GU(N) anticodons (tRNA-Asp, -Asn, -His and -Tyr). Catalysis occurs through a double-displacement mechanism. The nucleophile active site attacks the C1' of nucleotide 34 to detach the guanine base from the RNA, forming a covalent enzyme-RNA intermediate. The proton acceptor active site deprotonates the incoming PreQ1, allowing a nucleophilic attack on the C1' of the ribose to form the product. After dissociation, two additional enzymatic reactions on the tRNA convert PreQ1 to queuine (Q), resulting in the hypermodified nucleoside queuosine (7-(((4,5-cis-dihydroxy-2-cyclopenten-1-yl)amino)methyl)-7-deazaguanosine). This Helicobacter acinonychis (strain Sheeba) protein is Queuine tRNA-ribosyltransferase.